Here is a 290-residue protein sequence, read N- to C-terminus: Oxaloacetate decarboxylase 2 (290 aa).

S50 is a substrate binding site. A Mg(2+)-binding site is contributed by D88. 2 residues coordinate substrate: R159 and H235.

Belongs to the isocitrate lyase/PEP mutase superfamily. Oxaloacetate decarboxylase family. In terms of assembly, homotetramer; dimer of dimers. It depends on Mg(2+) as a cofactor.

It carries out the reaction oxaloacetate + H(+) = pyruvate + CO2. In terms of biological role, catalyzes the decarboxylation of oxaloacetate into pyruvate. Seems to play a role in maintaining cellular concentrations of bicarbonate and pyruvate. The sequence is that of Oxaloacetate decarboxylase 2 from Pseudomonas fluorescens (strain Pf0-1).